We begin with the raw amino-acid sequence, 1447 residues long: Sister chromatid cohesion protein PDS5 homolog B (1447 aa).

The stretch at Leu383–Tyr419 is one HEAT repeat. The segment at Lys1117 to Arg1447 is disordered. Position 1136 is an N6-acetyllysine (Lys1136). Polar residues predominate over residues Pro1137 to Val1155. Phosphoserine occurs at positions 1140, 1162, 1166, 1176, 1182, and 1191. The span at Ser1156–Pro1167 shows a compositional bias: low complexity. Positions Gly1172–Asn1184 are enriched in basic and acidic residues. Basic and acidic residues-rich tracts occupy residues Lys1196–Pro1214 and Gln1225–Pro1243. Residues Gly1245–His1254 show a composition bias toward basic residues. The segment at residues Ser1249 to Glu1261 is a DNA-binding region (a.T hook 1). Residue Thr1255 is modified to Phosphothreonine. Phosphoserine is present on residues Ser1257 and Ser1259. Basic and acidic residues predominate over residues Pro1265–Ile1274. Phosphoserine is present on Ser1283. A DNA-binding region (a.T hook 2) is located at residues Lys1287–Gly1299. The segment covering Thr1310 to Ser1319 has biased composition (basic residues). Ser1319 and Ser1334 each carry phosphoserine. The span at Lys1342–Gln1353 shows a compositional bias: basic residues. Positions Arg1355 to Gln1372 are enriched in polar residues. A phosphoserine mark is found at Ser1358 and Ser1366. Thr1367 carries the phosphothreonine modification. Residue Ser1369 is modified to Phosphoserine. Thr1370 and Thr1381 each carry phosphothreonine. The segment at residues Gln1372–Pro1384 is a DNA-binding region (a.T hook 3). Low complexity predominate over residues Ser1379–Lys1388. Residues Ser1383 and Ser1417 each carry the phosphoserine modification. Residues Ile1422–Val1432 show a composition bias toward acidic residues. Basic residues predominate over residues Val1437–Arg1447.

The protein belongs to the PDS5 family. In terms of assembly, interacts with the cohesin complex. Interacts with RAD21; the interaction is direct. Interacts with WAPL (via FGF motifs) or CDCA5 (via the FGF motif); the interaction is direct, cohesin-dependent and competitive. Widely expressed.

The protein resides in the nucleus. Regulator of sister chromatid cohesion in mitosis which may stabilize cohesin complex association with chromatin. May couple sister chromatid cohesion during mitosis to DNA replication. Cohesion ensures that chromosome partitioning is accurate in both meiotic and mitotic cells and plays an important role in DNA repair. Plays a role in androgen-induced proliferative arrest in prostate cells. The protein is Sister chromatid cohesion protein PDS5 homolog B (PDS5B) of Homo sapiens (Human).